Here is a 586-residue protein sequence, read N- to C-terminus: Anaerobic glycerol-3-phosphate dehydrogenase subunit A1 (586 aa).

6–34 provides a ligand contact to FAD; it reads SVLVIGGGSTGTGIARDLAMRGLDVTLVE. Residues 559–586 form a disordered region; that stretch reads GGAVADGGRERAADRADDDALGGADGDN. Over residues 574-586 the composition is skewed to acidic residues; sequence ADDDALGGADGDN.

Belongs to the FAD-dependent glycerol-3-phosphate dehydrogenase family. Composed of a catalytic GlpA/B dimer and of membrane bound GlpC. It depends on FAD as a cofactor. Requires FMN as cofactor.

Its subcellular location is the cell membrane. The catalysed reaction is a quinone + sn-glycerol 3-phosphate = dihydroxyacetone phosphate + a quinol. It participates in polyol metabolism; glycerol degradation via glycerol kinase pathway; glycerone phosphate from sn-glycerol 3-phosphate (anaerobic route): step 1/1. With respect to regulation, up-regulated by glycerol and no inhibition by glucose. Conversion of glycerol 3-phosphate to dihydroxyacetone phosphate. Required for growth on glycerol and for glycerol metabolism. In Haloferax volcanii (strain ATCC 29605 / DSM 3757 / JCM 8879 / NBRC 14742 / NCIMB 2012 / VKM B-1768 / DS2) (Halobacterium volcanii), this protein is Anaerobic glycerol-3-phosphate dehydrogenase subunit A1 (gpdA1).